The chain runs to 562 residues: Probable sesquiterpene synthase (562 aa).

3 residues coordinate Mg(2+): Asp-315, Asp-319, and Glu-467. Positions 315 to 319 match the DDXXD motif motif; the sequence is DDIYD.

This sequence belongs to the terpene synthase family. Tpsa subfamily. Requires Mg(2+) as cofactor. Mn(2+) is required as a cofactor.

In terms of biological role, sesquiterpene synthase. In Santalum spicatum (Australian sandalwood), this protein is Probable sesquiterpene synthase (SesquiTPS).